Here is a 234-residue protein sequence, read N- to C-terminus: Small ribosomal subunit protein uS3 (234 aa).

The KH type-2 domain occupies 39–107 (IRKFLKKELY…EVSINIKEVK (69 aa)).

Belongs to the universal ribosomal protein uS3 family. In terms of assembly, part of the 30S ribosomal subunit. Forms a tight complex with proteins S10 and S14.

In terms of biological role, binds the lower part of the 30S subunit head. Binds mRNA in the 70S ribosome, positioning it for translation. This chain is Small ribosomal subunit protein uS3, found in Helicobacter pylori (strain P12).